A 213-amino-acid chain; its full sequence is Flagellar transcriptional regulator FlhC (213 aa).

Positions 138, 141, 158, and 161 each coordinate Zn(2+).

The protein belongs to the FlhC family. As to quaternary structure, heterohexamer composed of two FlhC and four FlhD subunits. Each FlhC binds a FlhD dimer, forming a heterotrimer, and a hexamer assembles by dimerization of two heterotrimers. Zn(2+) serves as cofactor.

It localises to the cytoplasm. Functions in complex with FlhD as a master transcriptional regulator that regulates transcription of several flagellar and non-flagellar operons by binding to their promoter region. Activates expression of class 2 flagellar genes, including fliA, which is a flagellum-specific sigma factor that turns on the class 3 genes. Also regulates genes whose products function in a variety of physiological pathways. This is Flagellar transcriptional regulator FlhC from Cupriavidus metallidurans (strain ATCC 43123 / DSM 2839 / NBRC 102507 / CH34) (Ralstonia metallidurans).